Here is a 746-residue protein sequence, read N- to C-terminus: MGRNQKQNFFAARKRQKRENGPKRTDRQAQPYEEIKRDNAFFIKYYQLQKICATDEEWTQFLASIRDNLPTTFRVTGFKDEAKALLSIIETQLFTEYVRAVAELHQKAPEDVERPLCLPWYPNGLAYQLHLTRKDIRRSEPLYRLHNFLIVETTAGGISRQEAVSMIPPIVLDVRPTDKVLDMCAAPGSKTAQLIEALHAAPEEHKIPPGFVLANDVDNNRCYMLVHQAKRLNSPCLLVTNHDSSVFPNLVTTKPDGSKAILKFDKILCDVPCSGDGTLRKNPDIWLKWNLAQAYNLHGIQYRIVRRGAEMLEVGGRLVYSTCSLNPIENEAVLQRIIKDADGALELVDAGHLVPGLKYKPGMTDWKLATKEVDQIFTRFEEVPESLHTIIRPGMFPLPADEMAKIGLEKCLRVLPHLQDSGGFFVAVLEKRRQLSFEKNDVVELVKLNETAKQPAAEPQVDADGKPIEEKSVPWGPQRKKRRLHGYKEDPYVFFGENDPDYQAIKEFYQLDESLSQRCLLTRCVTEKKKNIYYCSEPIRDLVLNNENNIKIINTGVKTFVRCENRHTVHPFRLAQEGLQTSNAFMGASRRIQVEREDLVMMLNCTDPTQPPSTHELKKETQERCKELGVGSCILKYVDQRFTLYTVGWRGTSSLRAYVQKDETIHILRLLGADLSKFETNKYEDARVAAAAAADAEVGKSAEAEADSSGDGDATESTFSGSGAIDVTVAAETTGTPMDTEVVATS.

Residues 1 to 30 form a disordered region; that stretch reads MGRNQKQNFFAARKRQKRENGPKRTDRQAQ. Over residues 18–30 the composition is skewed to basic and acidic residues; sequence RENGPKRTDRQAQ. Residues 184 to 190, Asp-216, Asp-243, and Asp-270 each bind S-adenosyl-L-methionine; that span reads CAAPGSK. Cys-323 serves as the catalytic Nucleophile. Disordered stretches follow at residues 454 to 475 and 701 to 746; these read QPAA…SVPW and SAEA…VATS. Residues 463 to 472 are compositionally biased toward basic and acidic residues; it reads ADGKPIEEKS. Positions 704–714 are enriched in acidic residues; that stretch reads AEADSSGDGDA. Polar residues predominate over residues 731–746; it reads AETTGTPMDTEVVATS.

Belongs to the class I-like SAM-binding methyltransferase superfamily. RsmB/NOP family. TRM4 subfamily. Ubiquitously expressed during embryonic development. Some enrichment is observed in the proventriculus area of the foregut and in the hindgut.

The protein localises to the nucleus. It is found in the nucleolus. It carries out the reaction cytidine(34) in tRNA precursor + S-adenosyl-L-methionine = 5-methylcytidine(34) in tRNA precursor + S-adenosyl-L-homocysteine + H(+). Its function is as follows. RNA methyltransferase that methylates tRNAs. Methylates cytosine to 5-methylcytosine (m5C) at position 34 of intron-containing tRNA(Leu)(CAA) precursors. Required for short-term memory. The polypeptide is tRNA (cytosine(34)-C(5))-methyltransferase (Drosophila melanogaster (Fruit fly)).